Consider the following 312-residue polypeptide: Glycine--tRNA ligase alpha subunit (312 aa).

This sequence belongs to the class-II aminoacyl-tRNA synthetase family. In terms of assembly, tetramer of two alpha and two beta subunits.

The protein resides in the cytoplasm. The catalysed reaction is tRNA(Gly) + glycine + ATP = glycyl-tRNA(Gly) + AMP + diphosphate. The protein is Glycine--tRNA ligase alpha subunit (glyQ) of Buchnera aphidicola subsp. Acyrthosiphon pisum (strain APS) (Acyrthosiphon pisum symbiotic bacterium).